The sequence spans 342 residues: MPKEQNLDIERKQEHIEINLKQNVNSTLKSGLESIKFIHNALPEINYDSIDTTTTFLGKDMKAPILISSMTGGTARARDINYRLAQAAQKSGIAMGLGSMRILLTKPDTIKTFTVRHVAPDIPLLANIGAVQLNYGVTPKECQYLIDTIKADALILHLNVLHELTQPEGNKNWENLLPKIKEVINYLSVPVIVKEVGYGLSKQVAKKLIKAGVKVLDIAGSGGTSWSQVEAYRAKNSMQNRIASSFINWGITTLDSLKMLQEISKDITIIASGGLQSGIDGAKAIRMGANIFGLAGKLLKAADIAESLVLEEIQVIIEQLKITMLCTGSCTLKDLAKAEIMW.

Residue 11 to 12 coordinates substrate; it reads RK. FMN contacts are provided by residues serine 68, 69 to 71, serine 99, and asparagine 127; that span reads SMT. 99–101 contributes to the substrate binding site; it reads SMR. Glutamate 163 is a binding site for Mg(2+). FMN is bound by residues lysine 194, threonine 224, and 295-296; that span reads AG.

This sequence belongs to the IPP isomerase type 2 family. In terms of assembly, homooctamer. Dimer of tetramers. FMN serves as cofactor. NADPH is required as a cofactor. The cofactor is Mg(2+).

It is found in the cytoplasm. It carries out the reaction isopentenyl diphosphate = dimethylallyl diphosphate. Its function is as follows. Involved in the biosynthesis of isoprenoids. Catalyzes the 1,3-allylic rearrangement of the homoallylic substrate isopentenyl (IPP) to its allylic isomer, dimethylallyl diphosphate (DMAPP). This is Isopentenyl-diphosphate delta-isomerase from Rickettsia prowazekii (strain Madrid E).